The primary structure comprises 216 residues: MOB kinase activator 3C (216 aa).

Residues cysteine 82, cysteine 87, histidine 164, and histidine 169 each coordinate Zn(2+).

The protein belongs to the MOB1/phocein family.

Functionally, may regulate the activity of kinases. The chain is MOB kinase activator 3C (Mob3c) from Mus musculus (Mouse).